Here is a 363-residue protein sequence, read N- to C-terminus: Cobalt-precorrin-5B C(1)-methyltransferase (363 aa).

It belongs to the CbiD family.

It catalyses the reaction Co-precorrin-5B + S-adenosyl-L-methionine = Co-precorrin-6A + S-adenosyl-L-homocysteine. The protein operates within cofactor biosynthesis; adenosylcobalamin biosynthesis; cob(II)yrinate a,c-diamide from sirohydrochlorin (anaerobic route): step 6/10. Its function is as follows. Catalyzes the methylation of C-1 in cobalt-precorrin-5B to form cobalt-precorrin-6A. In Burkholderia pseudomallei (strain K96243), this protein is Cobalt-precorrin-5B C(1)-methyltransferase.